We begin with the raw amino-acid sequence, 67 residues long: Conotoxin Cl6.8 (67 aa).

An N-terminal signal peptide occupies residues 1–22; sequence MKVTAVLMVAVLVLTACQLTTA. Positions 23–39 are excised as a propeptide; the sequence is NTTDYVRRILARKSTMS. 3 cysteine pairs are disulfide-bonded: cysteine 43–cysteine 58, cysteine 50–cysteine 62, and cysteine 57–cysteine 66. Cysteine 66 carries the cysteine amide modification.

Belongs to the conotoxin O1 superfamily. As to expression, expressed by the venom duct.

The protein localises to the secreted. The polypeptide is Conotoxin Cl6.8 (Californiconus californicus (California cone)).